We begin with the raw amino-acid sequence, 833 residues long: Phosphatidylinositol-3-phosphatase myotubularin-2 (833 aa).

Residues 42 to 109 enclose the GRAM domain; it reads GSYSNLDCLL…VAIEKFNKLA (68 aa). The 467-residue stretch at 181 to 647 folds into the Myotubularin phosphatase domain; that stretch reads TNPKERLLNE…LAPTLWPQFH (467 aa). Residues 329–332, 354–355, 440–446, and Arg486 each bind substrate; these read NGAK, NI, and CSDGWDR. Residue Cys440 is the Phosphocysteine intermediate of the active site. The interval 503–530 is disordered; sequence QSSSARSFPSSPVRQSPGSAAAQSSSSS. Low complexity predominate over residues 504–530; sequence SSSARSFPSSPVRQSPGSAAAQSSSSS. A coiled-coil region spans residues 660–717; sequence ETEDQCRAMTVKYSEMKKEKEEAERKVDELSSAMESLNEELLNERDISRAARESAKRA. Residues 753–772 are disordered; it reads KCSHSIPQKQSEDNTTDVSE.

Belongs to the protein-tyrosine phosphatase family. Non-receptor class myotubularin subfamily. As to expression, mostly expressed in flowers and roots, and, to a lower extent, in siliques and leaves.

The protein localises to the cytoplasm. It catalyses the reaction a 1,2-diacyl-sn-glycero-3-phospho-(1D-myo-inositol-3-phosphate) + H2O = a 1,2-diacyl-sn-glycero-3-phospho-(1D-myo-inositol) + phosphate. The catalysed reaction is a 1,2-diacyl-sn-glycero-3-phospho-(1D-myo-inositol-3,5-bisphosphate) + H2O = a 1,2-diacyl-sn-glycero-3-phospho-(1D-myo-inositol-5-phosphate) + phosphate. In terms of biological role, phosphatase with phosphoinositide 3'-phosphatase activity that can use phosphatidylinositol-3-phosphate (PtdIns3P) and phosphatidylinositol-3,5-diphosphate (PtdIns3,5P(2)) as substrates and produces phosphatidylinositol-5-phosphate (PtdIns5P); participates in pathway(s) that transfer gene regulatory signals to the nucleus. The chain is Phosphatidylinositol-3-phosphatase myotubularin-2 (MTM2) from Arabidopsis thaliana (Mouse-ear cress).